The sequence spans 426 residues: MLDSKLLRSNLQDVADRLASRGFALDVARIEALEEQRKTVQTRTEALQAERNARSKSIGQAKQRGEDIAPLMADVERMAGELSAGKVELEAIQTELDSILLGIPNLPHESVPVGEDEDGNVEVRRWGTPTAFDFPVQDHVALGEKFGWLDFETAAKLSGARFALLRGPIARLHRALAQFMINLHVTEHGYEEAYTPYLVQAPALQGTGQLPKFEEDLFKIAREGEADLYLIPTAEVSLTNIVAGEIVDSKQLPIKFVAHTPCFRSEAGASGRDTRGMIRQHQFDKVEMVQIVEPSKSMEALESLTANAEKVLQLLGLPYRTLALCTGDMGFSAVKTYDLEVWIPSQDKYREISSCSNCGDFQARRMQARFRNPETGKPELVHTLNGSGLAVGRTLVAVLENYQQADGSIRVPDVLKPYMGGLEVIG.

Residue 233–235 (TAE) participates in L-serine binding. Position 264-266 (264-266 (RSE)) interacts with ATP. Glu287 contributes to the L-serine binding site. 351–354 (EISS) contributes to the ATP binding site. Ser387 contributes to the L-serine binding site.

It belongs to the class-II aminoacyl-tRNA synthetase family. Type-1 seryl-tRNA synthetase subfamily. As to quaternary structure, homodimer. The tRNA molecule binds across the dimer.

Its subcellular location is the cytoplasm. It catalyses the reaction tRNA(Ser) + L-serine + ATP = L-seryl-tRNA(Ser) + AMP + diphosphate + H(+). The enzyme catalyses tRNA(Sec) + L-serine + ATP = L-seryl-tRNA(Sec) + AMP + diphosphate + H(+). The protein operates within aminoacyl-tRNA biosynthesis; selenocysteinyl-tRNA(Sec) biosynthesis; L-seryl-tRNA(Sec) from L-serine and tRNA(Sec): step 1/1. In terms of biological role, catalyzes the attachment of serine to tRNA(Ser). Is also able to aminoacylate tRNA(Sec) with serine, to form the misacylated tRNA L-seryl-tRNA(Sec), which will be further converted into selenocysteinyl-tRNA(Sec). This is Serine--tRNA ligase from Pseudomonas fluorescens (strain Pf0-1).